A 160-amino-acid chain; its full sequence is Ribosomal RNA large subunit methyltransferase H (160 aa).

Residues L76 and G108 each contribute to the S-adenosyl-L-methionine site.

Belongs to the RNA methyltransferase RlmH family. In terms of assembly, homodimer.

The protein localises to the cytoplasm. The catalysed reaction is pseudouridine(1915) in 23S rRNA + S-adenosyl-L-methionine = N(3)-methylpseudouridine(1915) in 23S rRNA + S-adenosyl-L-homocysteine + H(+). Specifically methylates the pseudouridine at position 1915 (m3Psi1915) in 23S rRNA. The protein is Ribosomal RNA large subunit methyltransferase H of Rhodopseudomonas palustris (strain HaA2).